A 250-amino-acid chain; its full sequence is Intermembrane phospholipid transport system lipoprotein MlaA (250 aa).

The first 18 residues, 1–18, serve as a signal peptide directing secretion; that stretch reads MKTKTILTALLSAIALTG. A lipid anchor (N-palmitoyl cysteine) is attached at Cys19. Cys19 is lipidated: S-diacylglycerol cysteine.

The protein belongs to the MlaA family.

It localises to the cell outer membrane. Functionally, involved in a phospholipid transport pathway that maintains lipid asymmetry in the outer membrane by retrograde trafficking of phospholipids from the outer membrane to the inner membrane. The sequence is that of Intermembrane phospholipid transport system lipoprotein MlaA from Haemophilus influenzae (strain ATCC 51907 / DSM 11121 / KW20 / Rd).